Reading from the N-terminus, the 554-residue chain is (E)-beta-caryophyllene synthase (554 aa).

Mn(2+) is bound by residues Asp313 and Asp317. The DDXXD motif motif lies at 313 to 317; that stretch reads DDIYD. 2 homodimerization regions span residues 319 to 325 and 391 to 427; these read YGTLDEL and EAQW…LAVI. Positions 457 and 465 each coordinate Mn(2+).

This sequence belongs to the terpene synthase family. In terms of assembly, homodimer. Mn(2+) serves as cofactor. It depends on Mg(2+) as a cofactor. In terms of tissue distribution, expressed in peltate glandular trichomes. Present at low levels in flowers, leaves and stems.

The enzyme catalyses (2E,6E)-farnesyl diphosphate = (-)-(E)-beta-caryophyllene + diphosphate. It catalyses the reaction (2E,6E)-farnesyl diphosphate = alpha-humulene + diphosphate. It functions in the pathway secondary metabolite biosynthesis; terpenoid biosynthesis. Functionally, involved in the biosynthesis of phenolic sesquiterpenes natural products. Sesquiterpene synthase converting (2E,6E)-farnesyl diphosphate (FPP) to (E)-beta-caryophyllene and alpha-humulene. In Origanum vulgare (Wild marjoram), this protein is (E)-beta-caryophyllene synthase.